The chain runs to 1214 residues: Protein charlatan (1214 aa).

Disordered stretches follow at residues 1–20, 213–238, and 250–284; these read MATLIPVNGGHPAASGQSSN, HVNQQQQQQQQPHQSTPKSKKHRQEH, and SANAAQNLAQSTPTSAPSNSSGGSTSSSGGGGGRK. The span at 258–276 shows a compositional bias: low complexity; that stretch reads AQSTPTSAPSNSSGGSTSS. C2H2-type zinc fingers lie at residues 305-327 and 333-356; these read YACTHCPYSTDRRDLYTRHENIH and FQCYACLKQFNRADHVKKHFLRMH. Disordered stretches follow at residues 367–397 and 463–488; these read RRHVSAGSGSSGSGSSGSGSHHSGGRGNVTI and PVASSSSGSSGSHGGNGNGGSGSGLL. The span at 473–485 shows a compositional bias: gly residues; it reads GSHGGNGNGGSGS. C2H2-type zinc fingers lie at residues 496-518 and 522-545; these read FTCCYCPWSGADKWGLKRHLNTH and FVCLLCDYKAARSERLATHVLKVH. Disordered regions lie at residues 741-790, 848-946, and 1062-1084; these read SASS…ATSP, NDED…SGPS, and LSTPRRSPKKAAPAHSNSASNAS. 4 stretches are compositionally biased toward low complexity: residues 855-871, 885-896, 923-946, and 1071-1084; these read QQHQPHQQHHSQQQQQQ, NNNNNNNSNNNN, SPGTAAVSVAAAAATSPPSISGPS, and KAAPAHSNSASNAS.

As to expression, expressed in the PNS and CNS. In early blastoderm stages, it is ubiquitously expressed, then, before stage 5, it disappears from the poles of the embryo and faint stripes are visible. At stage 5, it also accumulates in the dorsal region, cephalic furrow ectodermal patches between the tracheal pits, where neurons of the PNS appear. In older embryos (stage 15) a strong expression is mostly restricted to the central nervous system (CNS) and PNS. In PNS, the pattern suggests that expression occur in many of the neurons of the ventral, lateral and dorsal clusters of neurons. In third instar wing disks, it is expressed in rows of cells on either side of the prospective anterior wing margin and in groups of cells that coincide with proneural clusters of ac/sc expression. Also expressed independently of ac/sc in certain areas of the disk, such as the postnotum and posterior dorsal proximal wing. Expressed in the proneural clusters of the leg disks and in the eye/antenna disk.

It localises to the nucleus. Probable transcription factor involved in the development of the adult pattern of macrochaetae. Required for accumulation of achaete (ac) and scute (sc) in proneural clusters. Probably acts by binding to the proneural cluster-specific enhancers of the ac/sc complex and increasing enhancer efficiency, thereby acting as a stimulator of ac/sc expression in proneural clusters. Also required for correct development of the embryonic/larval peripheral nervous system (PNS). The protein is Protein charlatan (chn) of Drosophila melanogaster (Fruit fly).